Consider the following 789-residue polypeptide: Toll-like receptor 6 (789 aa).

The first 31 residues, 1–31 (MTKDKEPIVKNFHLVCIVTLIVGTIIQFSDA), serve as a signal peptide directing secretion. Topologically, residues 32-587 (DEFAIDMSKT…QLSCSTSLLT (556 aa)) are extracellular. 19 LRR repeats span residues 54-77 (TKVLDMSQNYLSELQISDISFLSG), 78-101 (LKILVLSHNRLQLLDLSVFKFNQD), 102-122 (LEYLDLSHNQLKKMSCHPFVN), 123-147 (LKHLDLSFNDFDSLPICKEFGNLTQ), 148-168 (LDFLGLSATKLQQLDLLPIAH), 169-196 (LHLNCILLDLKGYYVKQNETESLQILNT), 197-219 (KKLHLVFHTGSFFSVQVNMSVNT), 220-250 (LGCLEMTNIKLNDKNCYFLMKFLLELTKGPS), 251-277 (LLNFTLNHMETTWKCLVRVFQFLWTKP), 278-303 (VEYLNIYNLTIVDDINKEYFIYCKTA), 304-330 (LKALKIEHITKTVFIFSWSSLYTLFSE), 331-354 (MNIMMLSITDTPFIHMLCPKTRST), 355-378 (FKFLDFTQNVFTDSIFENCSTLVE), 379-404 (LETLILQKNGLKDLFKIGLMTKGMPS), 405-428 (LEILDLSWNSLVFNRQRKCIWVGS), 429-449 (ILMLNMSSNLLTDLVFRCLPP), 450-473 (RVTVLDLHNNRIMSIPKDVTSLET), 474-495 (LQELNIAFNSLTDLPGCGTFSS), and 496-519 (LSVLIIDYNLISHPSTDFIQSCQN). Cysteine 117 and cysteine 139 are disulfide-bonded. The N-linked (GlcNAc...) asparagine glycan is linked to asparagine 144. N-linked (GlcNAc...) asparagine glycosylation is found at asparagine 186 and asparagine 214. A disulfide bond links cysteine 235 and cysteine 265. N-linked (GlcNAc...) asparagine glycans are attached at residues asparagine 253 and asparagine 285. Cysteine 348 and cysteine 373 form a disulfide bridge. N-linked (GlcNAc...) asparagine glycosylation occurs at asparagine 372. Residues cysteine 423 and cysteine 446 are joined by a disulfide bond. Residue asparagine 433 is glycosylated (N-linked (GlcNAc...) asparagine). Asparagine 519 carries N-linked (GlcNAc...) asparagine glycosylation. In terms of domain architecture, LRRCT spans 520–575 (ITSIKAGKNPFQCTCDLREFIKTISQMSSEVVKDWPDSYKCDYPESYKGTLLQDFH). The chain crosses the membrane as a helical span at residues 588 to 608 (VTIGATMLVLVVTVTFLCIYL). Topologically, residues 609–789 (DLPWYIRMVY…INIKLMEEKK (181 aa)) are cytoplasmic. The TIR domain occupies 639-780 (LQFHAFISYS…LFWANLRAAI (142 aa)).

Belongs to the Toll-like receptor family. Homodimer (via cytoplasmic TIR domain). Heterodimer with TLR2 via their respective extracellular domains. Binds MYD88 via their respective TIR domains. Interacts with CD36, following CD36 stimulation by oxLDL or amyloid-beta 42, and forms a heterodimer with TLR4. The trimeric complex is internalized and triggers inflammatory response. LYN kinase activity facilitates TLR4:TLR6 heterodimerization and signal initiation. The heterodimer TLR2:TLR6 interacts with CD14 and CD36 in response to triacylated lipopeptides.

It localises to the cell membrane. The protein localises to the cytoplasmic vesicle. Its subcellular location is the phagosome membrane. The protein resides in the membrane raft. It is found in the golgi apparatus. Participates in the innate immune response to Gram-positive bacteria and fungi. Specifically recognizes diacylated and, to a lesser extent, triacylated lipopeptides. In response to diacylated lipopeptides, forms the activation cluster TLR2:TLR6:CD14:CD36, this cluster triggers signaling from the cell surface and subsequently is targeted to the Golgi in a lipid-raft dependent pathway. Acts via MYD88 and TRAF6, leading to NF-kappa-B activation, cytokine secretion and the inflammatory response. Recognizes mycoplasmal macrophage-activating lipopeptide-2kD (MALP-2), soluble tuberculosis factor (STF), phenol-soluble modulin (PSM) and B.burgdorferi outer surface protein A lipoprotein (OspA-L) cooperatively with TLR2. In complex with TLR4, promotes sterile inflammation in monocytes/macrophages in response to oxidized low-density lipoprotein (oxLDL) or amyloid-beta 42. In this context, the initial signal is provided by oxLDL- or amyloid-beta 42-binding to CD36. This event induces the formation of a heterodimer of TLR4 and TLR6, which is rapidly internalized and triggers inflammatory response, leading to the NF-kappa-B-dependent production of CXCL1, CXCL2 and CCL9 cytokines, via MYD88 signaling pathway, and CCL5 cytokine, via TICAM1 signaling pathway, as well as IL1B secretion. In Dasypus novemcinctus (Nine-banded armadillo), this protein is Toll-like receptor 6 (TLR6).